A 328-amino-acid chain; its full sequence is UPF0194 membrane protein YE2891 (328 aa).

The signal sequence occupies residues 1–22 (MNRKKIIVAVVIVALLAAIGYG). Coiled coils occupy residues 80–109 (YVNA…REEE) and 139–208 (ANKA…TTLL).

It belongs to the UPF0194 family.

The protein localises to the periplasm. In Yersinia enterocolitica serotype O:8 / biotype 1B (strain NCTC 13174 / 8081), this protein is UPF0194 membrane protein YE2891.